The chain runs to 431 residues: Enolase (431 aa).

Gln163 contacts (2R)-2-phosphoglycerate. Catalysis depends on Glu205, which acts as the Proton donor. 3 residues coordinate Mg(2+): Asp242, Glu288, and Asp315. Residues Lys340, Arg369, Ser370, and Lys391 each contribute to the (2R)-2-phosphoglycerate site. Lys340 serves as the catalytic Proton acceptor.

This sequence belongs to the enolase family. Mg(2+) is required as a cofactor.

Its subcellular location is the cytoplasm. The protein resides in the secreted. It localises to the cell surface. It carries out the reaction (2R)-2-phosphoglycerate = phosphoenolpyruvate + H2O. Its pathway is carbohydrate degradation; glycolysis; pyruvate from D-glyceraldehyde 3-phosphate: step 4/5. In terms of biological role, catalyzes the reversible conversion of 2-phosphoglycerate (2-PG) into phosphoenolpyruvate (PEP). It is essential for the degradation of carbohydrates via glycolysis. The polypeptide is Enolase (Bacillus cereus (strain ZK / E33L)).